The sequence spans 506 residues: Histidine ammonia-lyase (506 aa).

The 5-imidazolinone (Ala-Gly) cross-link spans 144 to 146; sequence ASG. A 2,3-didehydroalanine (Ser) modification is found at Ser145.

It belongs to the PAL/histidase family. In terms of processing, contains an active site 4-methylidene-imidazol-5-one (MIO), which is formed autocatalytically by cyclization and dehydration of residues Ala-Ser-Gly.

The protein resides in the cytoplasm. The catalysed reaction is L-histidine = trans-urocanate + NH4(+). Its pathway is amino-acid degradation; L-histidine degradation into L-glutamate; N-formimidoyl-L-glutamate from L-histidine: step 1/3. The protein is Histidine ammonia-lyase of Legionella pneumophila subsp. pneumophila (strain Philadelphia 1 / ATCC 33152 / DSM 7513).